The primary structure comprises 966 residues: Catenin alpha-2 (966 aa).

The span at 924-940 (PEKKPLVKREKPEEYQT) shows a compositional bias: basic and acidic residues. Positions 924–952 (PEKKPLVKREKPEEYQTRVRRGSQKKHIS) are disordered. A compositionally biased stretch (basic residues) spans 941 to 951 (RVRRGSQKKHI).

This sequence belongs to the vinculin/alpha-catenin family.

It localises to the cell membrane. Its subcellular location is the cytoplasm. The protein resides in the cytoskeleton. It is found in the cell junction. The protein localises to the adherens junction. It localises to the cell projection. Its subcellular location is the axon. The protein resides in the nucleus. Its function is as follows. May function as a linker between cadherin adhesion receptors and the cytoskeleton to regulate cell-cell adhesion and differentiation in the nervous system. This chain is Catenin alpha-2 (ctnna2), found in Xenopus tropicalis (Western clawed frog).